We begin with the raw amino-acid sequence, 428 residues long: Glutamate-1-semialdehyde 2,1-aminomutase (428 aa).

K267 carries the N6-(pyridoxal phosphate)lysine modification.

It belongs to the class-III pyridoxal-phosphate-dependent aminotransferase family. HemL subfamily. In terms of assembly, homodimer. It depends on pyridoxal 5'-phosphate as a cofactor.

The protein localises to the cytoplasm. The catalysed reaction is (S)-4-amino-5-oxopentanoate = 5-aminolevulinate. Its pathway is porphyrin-containing compound metabolism; protoporphyrin-IX biosynthesis; 5-aminolevulinate from L-glutamyl-tRNA(Glu): step 2/2. This Flavobacterium johnsoniae (strain ATCC 17061 / DSM 2064 / JCM 8514 / BCRC 14874 / CCUG 350202 / NBRC 14942 / NCIMB 11054 / UW101) (Cytophaga johnsonae) protein is Glutamate-1-semialdehyde 2,1-aminomutase.